Consider the following 234-residue polypeptide: Large ribosomal subunit protein uL1 (234 aa).

The protein belongs to the universal ribosomal protein uL1 family. In terms of assembly, part of the 50S ribosomal subunit.

Its function is as follows. Binds directly to 23S rRNA. The L1 stalk is quite mobile in the ribosome, and is involved in E site tRNA release. Functionally, protein L1 is also a translational repressor protein, it controls the translation of the L11 operon by binding to its mRNA. This Aliivibrio salmonicida (strain LFI1238) (Vibrio salmonicida (strain LFI1238)) protein is Large ribosomal subunit protein uL1.